The sequence spans 96 residues: Co-chaperonin GroES (96 aa).

The protein belongs to the GroES chaperonin family. Heptamer of 7 subunits arranged in a ring. Interacts with the chaperonin GroEL.

The protein resides in the cytoplasm. Functionally, together with the chaperonin GroEL, plays an essential role in assisting protein folding. The GroEL-GroES system forms a nano-cage that allows encapsulation of the non-native substrate proteins and provides a physical environment optimized to promote and accelerate protein folding. GroES binds to the apical surface of the GroEL ring, thereby capping the opening of the GroEL channel. The polypeptide is Co-chaperonin GroES (Chromohalobacter salexigens (strain ATCC BAA-138 / DSM 3043 / CIP 106854 / NCIMB 13768 / 1H11)).